A 175-amino-acid polypeptide reads, in one-letter code: Cuticle protein CP1876 (175 aa).

As to expression, calcified shell.

This Cancer pagurus (Rock crab) protein is Cuticle protein CP1876.